A 273-amino-acid polypeptide reads, in one-letter code: Elongation factor Ts (273 aa).

Residues 80–83 are involved in Mg(2+) ion dislocation from EF-Tu; it reads TDFV.

This sequence belongs to the EF-Ts family.

It localises to the cytoplasm. In terms of biological role, associates with the EF-Tu.GDP complex and induces the exchange of GDP to GTP. It remains bound to the aminoacyl-tRNA.EF-Tu.GTP complex up to the GTP hydrolysis stage on the ribosome. This is Elongation factor Ts from Tropheryma whipplei (strain Twist) (Whipple's bacillus).